Consider the following 371-residue polypeptide: tRNA-specific 2-thiouridylase MnmA (371 aa).

Residues 12–19 (GMSGGVDS) and Met38 contribute to the ATP site. Residues 98-100 (NPD) form an interaction with target base in tRNA region. Cys103 (nucleophile) is an active-site residue. Cys103 and Cys200 form a disulfide bridge. Residue Gly128 participates in ATP binding. An interaction with tRNA region spans residues 150–152 (KDQ). The active-site Cysteine persulfide intermediate is Cys200. Residues 312 to 313 (RY) are interaction with tRNA.

Belongs to the MnmA/TRMU family. In terms of assembly, interacts with TusE.

The protein resides in the cytoplasm. It catalyses the reaction S-sulfanyl-L-cysteinyl-[protein] + uridine(34) in tRNA + AH2 + ATP = 2-thiouridine(34) in tRNA + L-cysteinyl-[protein] + A + AMP + diphosphate + H(+). Catalyzes the 2-thiolation of uridine at the wobble position (U34) of tRNA(Lys), tRNA(Glu) and tRNA(Gln), leading to the formation of s(2)U34, the first step of tRNA-mnm(5)s(2)U34 synthesis. Sulfur is provided by IscS, via a sulfur-relay system. Binds ATP and its substrate tRNAs. In Yersinia pestis bv. Antiqua (strain Antiqua), this protein is tRNA-specific 2-thiouridylase MnmA.